The primary structure comprises 130 residues: Small ribosomal subunit protein uS11 (130 aa).

The protein belongs to the universal ribosomal protein uS11 family. Part of the 30S ribosomal subunit. Interacts with proteins S7 and S18. Binds to IF-3.

Functionally, located on the platform of the 30S subunit, it bridges several disparate RNA helices of the 16S rRNA. Forms part of the Shine-Dalgarno cleft in the 70S ribosome. This is Small ribosomal subunit protein uS11 from Prochlorococcus marinus (strain MIT 9211).